The primary structure comprises 578 residues: Cytochrome P450 monooxygenase fsoE (578 aa).

Residues 28–48 (LLMAVAITYAISWINWFFTSW) form a helical membrane-spanning segment. Residue Cys517 coordinates heme.

It belongs to the cytochrome P450 family. It depends on heme as a cofactor.

It is found in the membrane. The enzyme catalyses 3-O-(beta-D-glucopyranosyl)-isomotiol + 2 reduced [NADPH--hemoprotein reductase] + 2 O2 = 2-deacetoxyfuscoatroside + 2 oxidized [NADPH--hemoprotein reductase] + 2 H2O + 3 H(+). It carries out the reaction 3-O-(beta-D-glucopyranosyl)-2alpha-hydroxyisomotiol + 2 reduced [NADPH--hemoprotein reductase] + 2 O2 = 2-deacetylfuscoatroside + 2 oxidized [NADPH--hemoprotein reductase] + 2 H2O + 3 H(+). It catalyses the reaction 3-O-(beta-D-glucopyranosyl)-2alpha-acetoxyisomotiol + 2 reduced [NADPH--hemoprotein reductase] + 2 O2 = fuscoatroside + 2 oxidized [NADPH--hemoprotein reductase] + 2 H2O + 3 H(+). The catalysed reaction is isomotiol + reduced [NADPH--hemoprotein reductase] + O2 = 19beta-hydroxyisomotiol + oxidized [NADPH--hemoprotein reductase] + H2O + H(+). The enzyme catalyses 2alpha-hydroxyisomotiol + reduced [NADPH--hemoprotein reductase] + O2 = 2alpha,19beta-dihydroxyisomotiol + oxidized [NADPH--hemoprotein reductase] + H2O + H(+). It carries out the reaction 2alpha,19beta-dihydroxyisomotiol + reduced [NADPH--hemoprotein reductase] + O2 = 2alpha-hydroxyismotiol-19-one + oxidized [NADPH--hemoprotein reductase] + 2 H2O + H(+). It catalyses the reaction 2alpha-hydroxyismotiol-19-one + 2 reduced [NADPH--hemoprotein reductase] + O2 = 2-deacetyl,3-deglucopyranosyl-fuscoatroside + 2 oxidized [NADPH--hemoprotein reductase] + H2O + 3 H(+). It functions in the pathway secondary metabolite biosynthesis; terpenoid biosynthesis. Functionally, cytochrome P450 monooxygenase; part of the gene cluster that mediates the biosynthesis of the enfumafungin-type antibiotic, fuscoatroside. Within the pathway, fsoE catalyzes the oxidative cleavage of the c19-C20 bond within the E-ring, resulting in the formation of a carboxyl group and a methyl group. FsoE exhibits preferential substrate selectivity toward glycoside substrates over their aglycones. The fuscoatroside biosynthesis is initiated by the cyclization of 2,3(S)-oxidosqualene through FsoA's terpene cyclase (TC) domain, leading to the formation of the fernane skeleton isomotiol, harboring a fernane triterpene skeleton with a C8-C9 double bond. Subsequently, C2-alpha-hydroxylation mediated by fsoD results in the production of 2-alpha-hydroxy-isomotiol, which is further acetylated by fsoF. The glycosyltransferase (GT) domain of FsoA may convert isomotiol, 2-alpha-hydroxy-isomotiol, and the acetylated derivative of 2-alpha-hydroxy-isomotiol into their corresponding glycosides 3-O-(beta-D-glucopyranosyl)-isomotiol, 3-O-(beta-D-glucopyranosyl)-2-alpha-hydroxy-isomotiol, and 3-O-(beta-D-glucopyranosyl)-2-alpha-acetoxy-isomotiol, which then undergo oxidative cleavage under the action of fsoE to form s 2-deacetoxy-fuscoatroside, 2-deacetyl-fuscoatroside, and fuscoatroside, respectively. Although hydroxylation followed by acetylation of 3-O-(beta-D-glucopyranosyl)-isomotiol and 2-deacetoxy-fuscoatroside by fsoD and fsoF could not be ruled out, this process is likely to occur with difficulty due to bulky steric hindrance caused by the presence of a glycan at C3 in these compounds. Interestingly, fsoE can also utilize the aglycones isomotiol and 2-alpha-hydroxy-isomotiol as substrates to generate 19-beta-hydroxy-isomotiol and 2-alpha,19-beta-dihydroxy-isomotiol, respectively. These reactions occur with lower efficiency. Finally, fsoE can further convert 2-alpha,19-beta-dihydroxy-isomotiol into 2-alpha-hydroxy-ismotiol-19-one and 2-alpha-hydroxy-ismotiol-19-one into 2-deacetyl-3-deglucopyranosyl-fuscoatroside. This Humicola fuscoatra protein is Cytochrome P450 monooxygenase fsoE.